The following is a 171-amino-acid chain: CASP-like protein 1C3 (171 aa).

The Cytoplasmic portion of the chain corresponds to 1–6 (MVKPKR). Residues 7–27 (LLSLLLRLIAFGATLAAVIIM) traverse the membrane as a helical segment. The Extracellular segment spans residues 28–52 (ATSHEKGSFFALSYEAKYSDTPAFK). Residues 53 to 73 (YFVIANAIVTVYGFLALFIPS) traverse the membrane as a helical segment. Residues 74 to 79 (ESPLWR) are Cytoplasmic-facing. A helical transmembrane segment spans residues 80 to 100 (LVLALDLVFTMLLISSISAAL). At 101–130 (AVAQVGKKGNSSAGWLPVCGQVTKYCNQVT) the chain is on the extracellular side. Asn-110 is a glycosylation site (N-linked (GlcNAc...) asparagine). Residues 131–151 (GALVAGFIAIITYIILLLYSI) form a helical membrane-spanning segment. Over 152–171 (YTFLNSLLGKTPCRLSSPGI) the chain is Cytoplasmic.

This sequence belongs to the Casparian strip membrane proteins (CASP) family. Homodimer and heterodimers.

It localises to the cell membrane. The protein is CASP-like protein 1C3 of Populus trichocarpa (Western balsam poplar).